Reading from the N-terminus, the 301-residue chain is F-box protein At4g02733 (301 aa).

The 56-residue stretch at asparagine 91–valine 146 folds into the F-box domain.

The sequence is that of F-box protein At4g02733 from Arabidopsis thaliana (Mouse-ear cress).